Here is a 286-residue protein sequence, read N- to C-terminus: Aquaporin NIP4-1 (286 aa).

A run of 2 helical transmembrane segments spans residues 59–79 (VMVEGLASFLVVFWSCVAALM) and 86–106 (LTFPMVCLVVAMTVAFVLSWL). Residues 112 to 114 (NPA) carry the NPA 1 motif. Helical transmembrane passes span 133-153 (LYVAAQLAGSLLACLSVNAVM), 173-193 (LPFLMEFLASAVLMIVIATVA), and 201-221 (TVGGIAIGAAVGGLGLVIGPV). The NPA 2 signature appears at 227 to 229 (NPA). Residues 241 to 261 (YDGVWIYVVAPVAGMLVGALC) traverse the membrane as a helical segment.

Belongs to the MIP/aquaporin (TC 1.A.8) family. NIP (TC 1.A.8.12) subfamily. In terms of tissue distribution, expressed in leaves and at lower levels in roots.

It localises to the membrane. Functionally, aquaporins facilitate the transport of water and small neutral solutes across cell membranes. This chain is Aquaporin NIP4-1 (NIP4-1), found in Oryza sativa subsp. japonica (Rice).